We begin with the raw amino-acid sequence, 232 residues long: MAIDLLSTFIKPMHREGTKFVAIFAVVTLVLFLIWEPLGWIGVGLTVWCYYFFRDPVRVTPTREGLIVSPADGVVSLIEPAVPPAELGMGPAPMTRVSVFMNVFDCHVNRAPIGGTVTAVAYRPGKFLNASLDKASEDNERNALAIRLADGRQIAVVQIAGLVARRILCEVREGTPLLTGERFGMIRFGSRLDVYLPEGVQPLVCLGQVMTSGETVLADLASPEARRTGAAR.

Serine 190 (schiff-base intermediate with substrate; via pyruvic acid) is an active-site residue. The residue at position 190 (serine 190) is a Pyruvic acid (Ser); by autocatalysis.

The protein belongs to the phosphatidylserine decarboxylase family. PSD-A subfamily. Heterodimer of a large membrane-associated beta subunit and a small pyruvoyl-containing alpha subunit. It depends on pyruvate as a cofactor. In terms of processing, is synthesized initially as an inactive proenzyme. Formation of the active enzyme involves a self-maturation process in which the active site pyruvoyl group is generated from an internal serine residue via an autocatalytic post-translational modification. Two non-identical subunits are generated from the proenzyme in this reaction, and the pyruvate is formed at the N-terminus of the alpha chain, which is derived from the carboxyl end of the proenzyme. The post-translation cleavage follows an unusual pathway, termed non-hydrolytic serinolysis, in which the side chain hydroxyl group of the serine supplies its oxygen atom to form the C-terminus of the beta chain, while the remainder of the serine residue undergoes an oxidative deamination to produce ammonia and the pyruvoyl prosthetic group on the alpha chain.

It is found in the cell membrane. The catalysed reaction is a 1,2-diacyl-sn-glycero-3-phospho-L-serine + H(+) = a 1,2-diacyl-sn-glycero-3-phosphoethanolamine + CO2. It participates in phospholipid metabolism; phosphatidylethanolamine biosynthesis; phosphatidylethanolamine from CDP-diacylglycerol: step 2/2. In terms of biological role, catalyzes the formation of phosphatidylethanolamine (PtdEtn) from phosphatidylserine (PtdSer). The sequence is that of Phosphatidylserine decarboxylase proenzyme from Cereibacter sphaeroides (strain ATCC 17023 / DSM 158 / JCM 6121 / CCUG 31486 / LMG 2827 / NBRC 12203 / NCIMB 8253 / ATH 2.4.1.) (Rhodobacter sphaeroides).